The primary structure comprises 484 residues: ATP synthase subunit beta (484 aa).

168-175 contributes to the ATP binding site; the sequence is GGAGVGKT.

Belongs to the ATPase alpha/beta chains family. F-type ATPases have 2 components, CF(1) - the catalytic core - and CF(0) - the membrane proton channel. CF(1) has five subunits: alpha(3), beta(3), gamma(1), delta(1), epsilon(1). CF(0) has three main subunits: a(1), b(2) and c(9-12). The alpha and beta chains form an alternating ring which encloses part of the gamma chain. CF(1) is attached to CF(0) by a central stalk formed by the gamma and epsilon chains, while a peripheral stalk is formed by the delta and b chains.

It localises to the cell membrane. It catalyses the reaction ATP + H2O + 4 H(+)(in) = ADP + phosphate + 5 H(+)(out). Its function is as follows. Produces ATP from ADP in the presence of a proton gradient across the membrane. The catalytic sites are hosted primarily by the beta subunits. The chain is ATP synthase subunit beta from Arthrobacter sp. (strain FB24).